A 490-amino-acid chain; its full sequence is Betaine aldehyde dehydrogenase (490 aa).

K(+) is bound at residue aspartate 93. 150–152 provides a ligand contact to NAD(+); sequence GAW. Lysine 162 (charge relay system) is an active-site residue. Residue 176 to 179 coordinates NAD(+); that stretch reads KPSE. Valine 180 contacts K(+). An NAD(+)-binding site is contributed by 230 to 233; sequence GIAS. Leucine 246 serves as a coordination point for K(+). Glutamate 252 acts as the Proton acceptor in catalysis. NAD(+) is bound by residues glycine 254, cysteine 286, and glutamate 387. Catalysis depends on cysteine 286, which acts as the Nucleophile. At cysteine 286 the chain carries Cysteine sulfenic acid (-SOH). Residues lysine 457 and glycine 460 each contribute to the K(+) site. Glutamate 464 acts as the Charge relay system in catalysis.

Belongs to the aldehyde dehydrogenase family. In terms of assembly, dimer of dimers. K(+) serves as cofactor.

The catalysed reaction is betaine aldehyde + NAD(+) + H2O = glycine betaine + NADH + 2 H(+). It participates in amine and polyamine biosynthesis; betaine biosynthesis via choline pathway; betaine from betaine aldehyde: step 1/1. Involved in the biosynthesis of the osmoprotectant glycine betaine. Catalyzes the irreversible oxidation of betaine aldehyde to the corresponding acid. This chain is Betaine aldehyde dehydrogenase, found in Yersinia pseudotuberculosis serotype O:1b (strain IP 31758).